We begin with the raw amino-acid sequence, 379 residues long: Lipid-A-disaccharide synthase (379 aa).

Belongs to the LpxB family.

It catalyses the reaction a lipid X + a UDP-2-N,3-O-bis[(3R)-3-hydroxyacyl]-alpha-D-glucosamine = a lipid A disaccharide + UDP + H(+). Its pathway is bacterial outer membrane biogenesis; LPS lipid A biosynthesis. Functionally, condensation of UDP-2,3-diacylglucosamine and 2,3-diacylglucosamine-1-phosphate to form lipid A disaccharide, a precursor of lipid A, a phosphorylated glycolipid that anchors the lipopolysaccharide to the outer membrane of the cell. In Pseudomonas fluorescens (strain SBW25), this protein is Lipid-A-disaccharide synthase.